The following is a 504-amino-acid chain: Maturase K (504 aa).

Belongs to the intron maturase 2 family. MatK subfamily.

The protein resides in the plastid. It localises to the chloroplast. Its function is as follows. Usually encoded in the trnK tRNA gene intron. Probably assists in splicing its own and other chloroplast group II introns. This chain is Maturase K, found in Draba nemorosa (Woodland whitlowgrass).